The sequence spans 204 residues: 3-isopropylmalate dehydratase small subunit (204 aa).

This sequence belongs to the LeuD family. LeuD type 1 subfamily. Heterodimer of LeuC and LeuD.

It catalyses the reaction (2R,3S)-3-isopropylmalate = (2S)-2-isopropylmalate. It functions in the pathway amino-acid biosynthesis; L-leucine biosynthesis; L-leucine from 3-methyl-2-oxobutanoate: step 2/4. Functionally, catalyzes the isomerization between 2-isopropylmalate and 3-isopropylmalate, via the formation of 2-isopropylmaleate. In Chloroflexus aggregans (strain MD-66 / DSM 9485), this protein is 3-isopropylmalate dehydratase small subunit.